A 161-amino-acid polypeptide reads, in one-letter code: MPSFDIVSKVDMQEVDNAINQTVKEIAQRYDFKGSKCEVTLEKENIKVLADDDFKLKAVIDILQSKFIKRNISPKSLQYGKAEQASGSMVRQIITLQVGISKEKAKEIGQVIKETKLKVQSQIQDDQLRVTGKNIDDLQEVIRVLKGKDLDIDMQFVNFRS.

This sequence belongs to the YajQ family.

In terms of biological role, nucleotide-binding protein. In Citrifermentans bemidjiense (strain ATCC BAA-1014 / DSM 16622 / JCM 12645 / Bem) (Geobacter bemidjiensis), this protein is Nucleotide-binding protein Gbem_0619.